The following is a 21-amino-acid chain: Protopolybiakinin-1 (21 aa).

The segment covering 1 to 11 (DKNKKPIRVGG) has biased composition (basic residues). The segment at 1 to 21 (DKNKKPIRVGGRRPPGFTPFR) is disordered.

This sequence belongs to the bradykinin-related peptide family. As to expression, expressed by the venom gland.

The protein resides in the secreted. Its function is as follows. Causes constriction of the isolated rat ileum muscles (is 13-fold less potent than bradykinin (BK)), as well as degranulation of mast cells (is 7-fold more potent than BK). In vivo, causes algesic effects. Muscle constriction and algesic effects are partially mediated by bradykinin receptors B2 (BDKRB2). The chain is Protopolybiakinin-1 from Protopolybia exigua (Neotropical social wasp).